A 499-amino-acid chain; its full sequence is Protein NODULATION SIGNALING PATHWAY 2 (499 aa).

The disordered stretch occupies residues 64-106 (NNTGPAFSDHTASTTSEEEEEEEATTTTMTTTTTTTTTTPEAA). Positions 88–104 (TTTTMTTTTTTTTTTPE) are enriched in low complexity. The GRAS domain maps to 106–491 (ADDDFKGLRL…RRLLSASLWT (386 aa)). The interval 113–182 (LRLVHLLMAG…AGGAYNSSSK (70 aa)) is leucine repeat I (LRI). Residues 201–265 (FQLLQDMSPY…PNGPHLRITA (65 aa)) are VHIID. The VHIID motif lies at 232–236 (VHIVD). Residues 281-313 (ETGRRLTAFATSLGQPFSFHHSRLESDETFRPA) form a leucine repeat II (LRII) region. The tract at residues 323–414 (LVFNCMLNLP…RVFLGPRIVG (92 aa)) is PFYRE. Positions 417 to 491 (ARIYRTGGGG…RRLLSASLWT (75 aa)) are SAW.

Belongs to the GRAS family. In terms of assembly, interacts with IPN2. Binds to RAD1. Interacts with RAM1. Highly expressed in roots.

Its subcellular location is the nucleus membrane. The protein localises to the endoplasmic reticulum. Functionally, transcriptional regulator essential for Nod-factor-induced gene expression. Acts downstream of calcium spiking and a calcium/calmodulin-dependent protein kinase required for activation of early nodulation gene expression. Transcription factor involved in the induction of NIN and ENOD40 genes, which are required for rhizobial infection and early nodule development. Does not seem to contribute to the early steps of the arbuscular mycorrhizal fungus infection and colonization processes in roots. Transcription factor involved in the positive regulation of the beta-carotene isomerase D27, which participates in a pathway leading to biosynthesis of strigolactones in roots. This Lotus japonicus (Lotus corniculatus var. japonicus) protein is Protein NODULATION SIGNALING PATHWAY 2.